Reading from the N-terminus, the 457-residue chain is Argininosuccinate lyase (457 aa).

The protein belongs to the lyase 1 family. Argininosuccinate lyase subfamily.

The protein localises to the cytoplasm. It catalyses the reaction 2-(N(omega)-L-arginino)succinate = fumarate + L-arginine. Its pathway is amino-acid biosynthesis; L-arginine biosynthesis; L-arginine from L-ornithine and carbamoyl phosphate: step 3/3. The chain is Argininosuccinate lyase from Shigella sonnei (strain Ss046).